Here is a 142-residue protein sequence, read N- to C-terminus: Baculoviral IAP repeat-containing protein 5 (142 aa).

The BIR repeat unit spans residues R18–S88. A Phosphoserine; by AURKC modification is found at S20. The residue at position 23 (K23) is an N6-acetyllysine. At T34 the chain carries Phosphothreonine; by CDK1 and CDK15. A Phosphothreonine modification is found at T48. Residues C57, C60, H77, and C84 each contribute to the Zn(2+) site. An N6-acetyllysine mark is found at K90, K110, K112, and K115. T117 is subject to Phosphothreonine; by AURKB. K129 is modified (N6-acetyllysine).

The protein belongs to the IAP family. In terms of assembly, monomer or homodimer. Exists as a homodimer in the apo state and as a monomer in the CPC-bound state. The monomer protects cells against apoptosis more efficiently than the dimer. Only the dimeric form is capable of enhancing tubulin stability in cells. When phosphorylated, interacts with LAMTOR5/HBXIP; the resulting complex binds pro-CASP9, as well as active CASP9, but much less efficiently. Component of the chromosomal passenger complex (CPC) composed of at least BIRC5/survivin, CDCA8/borealin, INCENP, AURKB or AURKC; in the complex forms a triple-helix bundle-based subcomplex with INCENP and CDCA8. Interacts with JTB. Interacts (via BIR domain) with histone H3 phosphorylated at 'Thr-3' (H3pT3). Interacts with EVI5. Interacts with GTP-bound RAN in both the S and M phases of the cell cycle. Interacts with USP9X. Interacts with tubulin. Interacts with BIRC2/c-IAP1. The acetylated form at Lys-129 interacts with STAT3. The monomeric form deacetylated at Lys-129 interacts with XPO1/CRM1. The monomeric form interacts with XIAP/BIRC4. Both the dimeric and monomeric form can interact with DIABLO/SMAC. Interacts with BIRC6/bruce. Interacts with FBXL7; this interaction facilitates the polyubiquitination and subsequent proteasomal degradation of BIRC5 by the SCF(FBXL7) E3 ubiquitin-protein ligase complex. In terms of processing, ubiquitinated by the Cul9-RING ubiquitin-protein ligase complex, leading to its degradation. Ubiquitination is required for centrosomal targeting. Deubiquitinated by USP35 or USP38; leading to stabilization. Post-translationally, acetylation at Lys-129 results in its homodimerization, while deacetylation promotes the formation of monomers which heterodimerize with XPO1/CRM1 which facilitates its nuclear export. The acetylated form represses STAT3 transactivation. The dynamic equilibrium between its acetylation and deacetylation at Lys-129 determines its interaction with XPO1/CRM1, its subsequent subcellular localization, and its ability to inhibit STAT3 transactivation. In vitro phosphorylation at Thr-117 by AURKB prevents interaction with INCENP and localization to mitotic chromosomes. Phosphorylation at Thr-48 by CK2 is critical for its mitotic and anti-apoptotic activities. Phosphorylation at Thr-34 by CDK15 is critical for its anti-apoptotic activity. Phosphorylation at Ser-20 by AURKC is critical for regulation of proper chromosome alignment and segregation, and possibly cytokinesis.

It is found in the cytoplasm. The protein resides in the nucleus. Its subcellular location is the chromosome. It localises to the centromere. The protein localises to the cytoskeleton. It is found in the spindle. The protein resides in the kinetochore. Its subcellular location is the midbody. Functionally, multitasking protein that has dual roles in promoting cell proliferation and preventing apoptosis. Component of a chromosome passage protein complex (CPC) which is essential for chromosome alignment and segregation during mitosis and cytokinesis. Acts as an important regulator of the localization of this complex; directs CPC movement to different locations from the inner centromere during prometaphase to midbody during cytokinesis and participates in the organization of the center spindle by associating with polymerized microtubules. Involved in the recruitment of CPC to centromeres during early mitosis via association with histone H3 phosphorylated at 'Thr-3' (H3pT3) during mitosis. The complex with RAN plays a role in mitotic spindle formation by serving as a physical scaffold to help deliver the RAN effector molecule TPX2 to microtubules. May counteract a default induction of apoptosis in G2/M phase. The acetylated form represses STAT3 transactivation of target gene promoters. May play a role in neoplasia. Inhibitor of CASP3 and CASP7. Essential for the maintenance of mitochondrial integrity and function. The sequence is that of Baculoviral IAP repeat-containing protein 5 (BIRC5) from Canis lupus familiaris (Dog).